A 308-amino-acid chain; its full sequence is Glycerol-3-phosphate dehydrogenase [NAD(P)+] (308 aa).

Residues Trp-15, Arg-35, Arg-36, and Lys-83 each contribute to the NADPH site. Residues Lys-83 and Gly-111 each coordinate sn-glycerol 3-phosphate. Ser-115 provides a ligand contact to NADPH. Sn-glycerol 3-phosphate is bound by residues Lys-166, Asp-219, Ser-229, Arg-230, and Asn-231. Lys-166 (proton acceptor) is an active-site residue. NADPH is bound at residue Arg-230. Glu-256 provides a ligand contact to NADPH.

It belongs to the NAD-dependent glycerol-3-phosphate dehydrogenase family.

It localises to the cytoplasm. It catalyses the reaction sn-glycerol 3-phosphate + NAD(+) = dihydroxyacetone phosphate + NADH + H(+). The catalysed reaction is sn-glycerol 3-phosphate + NADP(+) = dihydroxyacetone phosphate + NADPH + H(+). It participates in membrane lipid metabolism; glycerophospholipid metabolism. Functionally, catalyzes the reduction of the glycolytic intermediate dihydroxyacetone phosphate (DHAP) to sn-glycerol 3-phosphate (G3P), the key precursor for phospholipid synthesis. The chain is Glycerol-3-phosphate dehydrogenase [NAD(P)+] from Synechococcus elongatus (strain ATCC 33912 / PCC 7942 / FACHB-805) (Anacystis nidulans R2).